Here is a 157-residue protein sequence, read N- to C-terminus: 2-C-methyl-D-erythritol 2,4-cyclodiphosphate synthase (157 aa).

Asp8 and His10 together coordinate a divalent metal cation. 4-CDP-2-C-methyl-D-erythritol 2-phosphate-binding positions include 8-10 and 34-35; these read DVH and HS. His42 is an a divalent metal cation binding site. Residues 56-58, 61-65, 100-106, 132-135, Phe139, and Arg142 contribute to the 4-CDP-2-C-methyl-D-erythritol 2-phosphate site; these read DIG, FPDTD, AQAPKMA, and TTTE.

This sequence belongs to the IspF family. As to quaternary structure, homotrimer. A divalent metal cation serves as cofactor.

It carries out the reaction 4-CDP-2-C-methyl-D-erythritol 2-phosphate = 2-C-methyl-D-erythritol 2,4-cyclic diphosphate + CMP. It participates in isoprenoid biosynthesis; isopentenyl diphosphate biosynthesis via DXP pathway; isopentenyl diphosphate from 1-deoxy-D-xylulose 5-phosphate: step 4/6. Involved in the biosynthesis of isopentenyl diphosphate (IPP) and dimethylallyl diphosphate (DMAPP), two major building blocks of isoprenoid compounds. Catalyzes the conversion of 4-diphosphocytidyl-2-C-methyl-D-erythritol 2-phosphate (CDP-ME2P) to 2-C-methyl-D-erythritol 2,4-cyclodiphosphate (ME-CPP) with a corresponding release of cytidine 5-monophosphate (CMP). The polypeptide is 2-C-methyl-D-erythritol 2,4-cyclodiphosphate synthase (Edwardsiella ictaluri (strain 93-146)).